A 272-amino-acid chain; its full sequence is Ribosomal RNA small subunit methyltransferase A (272 aa).

Positions 18, 20, 45, 66, 91, and 113 each coordinate S-adenosyl-L-methionine.

It belongs to the class I-like SAM-binding methyltransferase superfamily. rRNA adenine N(6)-methyltransferase family. RsmA subfamily.

It is found in the cytoplasm. The catalysed reaction is adenosine(1518)/adenosine(1519) in 16S rRNA + 4 S-adenosyl-L-methionine = N(6)-dimethyladenosine(1518)/N(6)-dimethyladenosine(1519) in 16S rRNA + 4 S-adenosyl-L-homocysteine + 4 H(+). In terms of biological role, specifically dimethylates two adjacent adenosines (A1518 and A1519) in the loop of a conserved hairpin near the 3'-end of 16S rRNA in the 30S particle. May play a critical role in biogenesis of 30S subunits. The sequence is that of Ribosomal RNA small subunit methyltransferase A from Yersinia enterocolitica serotype O:8 / biotype 1B (strain NCTC 13174 / 8081).